The chain runs to 479 residues: MNLTQIWKATLSALQTQTSRHDYEALLRPATLLSLDNGAAFIGVSSPGQKEGLENRLLMPLRNALARVVGYPVQVQVLIANLNSRTEPSPSLTLSNGSRLMSDPEPVVAETPAPALTPGNGTGERVVQLDLASAMRSGMLNPRYTFSSFIVGSSNRLAHAACLAVADNPGQAYNPLFLYGGVGLGKTHLLHAIGNRVLDRDPEINVLYVSSEKFTNDLINAIRRQQTEEFRMRYRNIDVLLIDDIQFIAGKDATQEEFFHTFNTLHSAAKHIVISSDRPPKAILTLEERLRSRFEWGLIVDVQPPDLETRTAILRAKAEQMSVHVPDEVIDFLAHKIQSNIRELEGSLNRVAAYAELNRAPITIETATAALADLLGNQRRRRISAEAILQIVSEHYGIEVEQLRARNRSRHVVVPRQVAMYLLREETESSLVDIGNLLGGRDHTTVMYGCEKIAEEINSDSRLRSEVMAIRERIQMLRG.

The segment at 1-71 (MNLTQIWKAT…RNALARVVGY (71 aa)) is domain I, interacts with DnaA modulators. The domain II stretch occupies residues 71–138 (YPVQVQVLIA…LDLASAMRSG (68 aa)). Polar residues predominate over residues 86 to 99 (TEPSPSLTLSNGSR). A disordered region spans residues 86–106 (TEPSPSLTLSNGSRLMSDPEP). Residues 139–355 (MLNPRYTFSS…GSLNRVAAYA (217 aa)) form a domain III, AAA+ region region. Residues G183, G185, K186, and T187 each contribute to the ATP site. The tract at residues 356–479 (ELNRAPITIE…IRERIQMLRG (124 aa)) is domain IV, binds dsDNA.

Belongs to the DnaA family. As to quaternary structure, oligomerizes as a right-handed, spiral filament on DNA at oriC.

It is found in the cytoplasm. Its function is as follows. Plays an essential role in the initiation and regulation of chromosomal replication. ATP-DnaA binds to the origin of replication (oriC) to initiate formation of the DNA replication initiation complex once per cell cycle. Binds the DnaA box (a 9 base pair repeat at the origin) and separates the double-stranded (ds)DNA. Forms a right-handed helical filament on oriC DNA; dsDNA binds to the exterior of the filament while single-stranded (ss)DNA is stabiized in the filament's interior. The ATP-DnaA-oriC complex binds and stabilizes one strand of the AT-rich DNA unwinding element (DUE), permitting loading of DNA polymerase. After initiation quickly degrades to an ADP-DnaA complex that is not apt for DNA replication. Binds acidic phospholipids. This chain is Chromosomal replication initiator protein DnaA, found in Chloroflexus aurantiacus (strain ATCC 29366 / DSM 635 / J-10-fl).